The chain runs to 595 residues: uncharacterized protein (595 aa).

The segment at 1–21 is disordered; it reads MSSQLKSTWAPVPSTKPSQPC. 11 WD repeats span residues 56–95, 100–143, 144–184, 187–226, 229–268, 313–352, 356–393, 433–472, 477–516, 520–559, and 564–594; these read EHTA…KILK, AISG…GEIF, GHSS…FNRS, VHSK…QVYE, AHKG…LIRE, GHQR…AFPL, SHTN…FAKD, KTIY…LCEV, DSTA…VITS, FHTG…KYIA, and HSLG…WSVT.

This sequence belongs to the WD repeat AIP1 family.

This is an uncharacterized protein from Schizosaccharomyces pombe (strain 972 / ATCC 24843) (Fission yeast).